The primary structure comprises 145 residues: Putative antiporter subunit mnhG2 (145 aa).

Transmembrane regions (helical) follow at residues Ile-11–Val-31, Val-51–Val-71, and Arg-72–Ala-92.

Belongs to the CPA3 antiporters (TC 2.A.63) subunit G family. As to quaternary structure, may form a heterooligomeric complex that consists of seven subunits: mnhA2, mnhB2, mnhC2, mnhD2, mnhE2, mnhF2 and mnhG2.

Its subcellular location is the cell membrane. This Staphylococcus aureus (strain COL) protein is Putative antiporter subunit mnhG2 (mnhG2).